We begin with the raw amino-acid sequence, 118 residues long: Vesicle-associated membrane protein 1 (118 aa).

Over residues methionine 1–alanine 15 the composition is skewed to low complexity. A disordered region spans residues methionine 1–glutamine 36. Residues methionine 1–lysine 96 lie on the Cytoplasmic side of the membrane. Positions arginine 33–lysine 93 constitute a v-SNARE coiled-coil homology domain. Serine 63 is subject to Phosphoserine. The chain crosses the membrane as a helical; Anchor for type IV membrane protein span at residues methionine 97–phenylalanine 116. The Vesicular segment spans residues phenylalanine 117–threonine 118.

The protein belongs to the synaptobrevin family. In terms of assembly, interacts with VAPA and VAPB. Post-translationally, (Microbial infection) Targeted and hydrolyzed by C.botulinum neurotoxin type X (BoNT/X) which hydrolyzes the 68-Arg-|-Ala-69 bond and probably inhibits neurotransmitter release. It remains unknown whether BoNT/X is ever produced, or what organisms it targets. As to expression, highly expressed in the zona incerta and rostral periolivary region of the brain. Other neuroanatomical regions show negligible expression. Expressed in the retina, expression observed in the outer segments of the photoreceptors, in the outer and inner plexiform layers, and in a subset of ganglion cells.

It is found in the cytoplasmic vesicle. Its subcellular location is the secretory vesicle. The protein localises to the synaptic vesicle membrane. The protein resides in the synapse. It localises to the synaptosome. It is found in the cytoplasmic vesicle membrane. In terms of biological role, involved in the targeting and/or fusion of transport vesicles to their target membrane. This is Vesicle-associated membrane protein 1 (Vamp1) from Mus musculus (Mouse).